Here is a 209-residue protein sequence, read N- to C-terminus: MIGKLKGLVDSQGEDYVILDVNGVGYVVHCSSRTLQNLPPQGQATALAIDTQMREDSIKLYGFASETEREWFRLLQSVQGVGAKVALAIQGVLRPGEIVTAIAAQDRAAFARASGVGAKLAARILAELKDKAPALGASLHTLAGAGSEGAGVEAPASGAVSDAISVLVNLGFGRSQAAVAVAASSKALGSGAGAGDLAKRALQELAQSG.

The interval 1–64 is domain I; it reads MIGKLKGLVD…EDSIKLYGFA (64 aa). Positions 65–143 are domain II; the sequence is SETEREWFRL…ALGASLHTLA (79 aa). The interval 144–154 is flexible linker; sequence GAGSEGAGVEA. A domain III region spans residues 155–209; sequence PASGAVSDAISVLVNLGFGRSQAAVAVAASSKALGSGAGAGDLAKRALQELAQSG.

The protein belongs to the RuvA family. In terms of assembly, homotetramer. Forms an RuvA(8)-RuvB(12)-Holliday junction (HJ) complex. HJ DNA is sandwiched between 2 RuvA tetramers; dsDNA enters through RuvA and exits via RuvB. An RuvB hexamer assembles on each DNA strand where it exits the tetramer. Each RuvB hexamer is contacted by two RuvA subunits (via domain III) on 2 adjacent RuvB subunits; this complex drives branch migration. In the full resolvosome a probable DNA-RuvA(4)-RuvB(12)-RuvC(2) complex forms which resolves the HJ.

The protein localises to the cytoplasm. In terms of biological role, the RuvA-RuvB-RuvC complex processes Holliday junction (HJ) DNA during genetic recombination and DNA repair, while the RuvA-RuvB complex plays an important role in the rescue of blocked DNA replication forks via replication fork reversal (RFR). RuvA specifically binds to HJ cruciform DNA, conferring on it an open structure. The RuvB hexamer acts as an ATP-dependent pump, pulling dsDNA into and through the RuvAB complex. HJ branch migration allows RuvC to scan DNA until it finds its consensus sequence, where it cleaves and resolves the cruciform DNA. This chain is Holliday junction branch migration complex subunit RuvA, found in Methylocella silvestris (strain DSM 15510 / CIP 108128 / LMG 27833 / NCIMB 13906 / BL2).